A 422-amino-acid chain; its full sequence is FAD-dependent monooxygenase ptmM (422 aa).

The helical transmembrane segment at 8–24 threads the bilayer; the sequence is VIIVGGSIAGLTLAHCL. Residues Glu-35, Gly-49, Arg-108, Asp-308, and Ala-321 each contribute to the FAD site.

Belongs to the paxM FAD-dependent monooxygenase family. The cofactor is FAD.

It localises to the membrane. It functions in the pathway secondary metabolite biosynthesis. Its function is as follows. FAD-dependent monooxygenase; part of the gene cluster that mediates the biosynthesis of the indole diterpenes penitrems. The geranylgeranyl diphosphate (GGPP) synthase ptmG catalyzes the first step in penitrem biosynthesis via conversion of farnesyl pyrophosphate and isopentyl pyrophosphate into geranylgeranyl pyrophosphate (GGPP). Condensation of indole-3-glycerol phosphate with GGPP by the prenyl transferase ptmC then forms 3-geranylgeranylindole (3-GGI). Epoxidation by the FAD-dependent monooxygenase ptmM leads to a epoxidized-GGI that is substrate of the terpene cyclase ptmB for cyclization to yield paspaline. Paspaline is subsequently converted to 13-desoxypaxilline by the cytochrome P450 monooxygenase ptmP, the latter being then converted to paxilline by the cytochrome P450 monooxygenase ptmQ. Paxilline is converted to beta-paxitriol via C-10 ketoreduction by the short-chain dehydrogenase ptmH which can be monoprenylated at the C-20 by the indole diterpene prenyltransferase ptmD. A two-step elimination (acetylation and elimination) process performed by the O-acetyltransferase ptmV and ptmI leads to the production of the prenylated form of penijanthine. The FAD-linked oxidoreductase ptmO then converts the prenylated form of penijanthine into PC-M5 which is in turn transformed into PC-M4 by the aromatic dimethylallyltransferase ptmE. Five sequential oxidative transformations performed by the cytochrome P450 monooxygenases ptmK, ptmU, ptmL, ptmN and ptmJ yield the various penitrem compounds. PtmK, ptmU and ptmM are involved in the formation of the key bicyclic ring of penitrem C via the formation of the intermediates secopenitrem D and penitrem D. PtmL catalyzes the epoxidation of penitrem D and C to yield penitrem B and F, respectively. PtmJ catalyzes the last benzylic hydroxylation to convert penitrem B to prenitrem E and penitrem F to penitrem A. The sequence is that of FAD-dependent monooxygenase ptmM from Penicillium ochrochloron.